The following is a 76-amino-acid chain: MATFDDVKDVIVDKLGVDEGKVTPEARFVEDLGADSLETVELIMGLEDKFGVTIPDEAAETIRTVQAAVDYIDNNQ.

Residues 1–76 (MATFDDVKDV…AAVDYIDNNQ (76 aa)) enclose the Carrier domain. An O-(pantetheine 4'-phosphoryl)serine modification is found at Ser36.

Belongs to the acyl carrier protein (ACP) family. 4'-phosphopantetheine is transferred from CoA to a specific serine of apo-ACP by AcpS. This modification is essential for activity because fatty acids are bound in thioester linkage to the sulfhydryl of the prosthetic group.

Its subcellular location is the cytoplasm. It functions in the pathway lipid metabolism; fatty acid biosynthesis. Functionally, carrier of the growing fatty acid chain in fatty acid biosynthesis. The sequence is that of Acyl carrier protein from Deinococcus radiodurans (strain ATCC 13939 / DSM 20539 / JCM 16871 / CCUG 27074 / LMG 4051 / NBRC 15346 / NCIMB 9279 / VKM B-1422 / R1).